A 355-amino-acid chain; its full sequence is Undecaprenyl-phosphate alpha-N-acetylglucosaminyl 1-phosphate transferase (355 aa).

8 helical membrane passes run 1 to 21, 39 to 59, 63 to 83, 123 to 143, 182 to 202, 208 to 228, 237 to 257, and 315 to 335; these read MLSIFVTFLGAFLTLIVMRPL, GTIPLIGGASLFVGNLCYYLM, QLRLPYLYLFSIFVLLAIGIL, FQLTLGSIGLIITVFATIAII, WSFALIVSILPYLMLNLGIPF, VFMGDAGSTLIGFTIIWILLL, MNPVTALWIIAIPLIDMVAII, and WAMFVGFFILFFLYVYSITHA.

Belongs to the glycosyltransferase 4 family. WecA subfamily. Mg(2+) is required as a cofactor. The cofactor is Mn(2+).

It is found in the cell inner membrane. It carries out the reaction di-trans,octa-cis-undecaprenyl phosphate + UDP-N-acetyl-alpha-D-glucosamine = N-acetyl-alpha-D-glucosaminyl-di-trans,octa-cis-undecaprenyl diphosphate + UMP. It participates in bacterial outer membrane biogenesis; LPS O-antigen biosynthesis. Catalyzes the transfer of the GlcNAc-1-phosphate moiety from UDP-GlcNAc onto the carrier lipid undecaprenyl phosphate (C55-P), yielding GlcNAc-pyrophosphoryl-undecaprenyl (GlcNAc-PP-C55). This is Undecaprenyl-phosphate alpha-N-acetylglucosaminyl 1-phosphate transferase from Haemophilus influenzae (strain ATCC 51907 / DSM 11121 / KW20 / Rd).